A 130-amino-acid chain; its full sequence is Small ribosomal subunit protein uS9 (130 aa).

This sequence belongs to the universal ribosomal protein uS9 family.

This Buchnera aphidicola subsp. Acyrthosiphon pisum (strain Tuc7) protein is Small ribosomal subunit protein uS9.